We begin with the raw amino-acid sequence, 275 residues long: Elongation factor Ts (275 aa).

The tract at residues Thr-76–Val-79 is involved in Mg(2+) ion dislocation from EF-Tu.

This sequence belongs to the EF-Ts family.

The protein resides in the cytoplasm. In terms of biological role, associates with the EF-Tu.GDP complex and induces the exchange of GDP to GTP. It remains bound to the aminoacyl-tRNA.EF-Tu.GTP complex up to the GTP hydrolysis stage on the ribosome. This chain is Elongation factor Ts, found in Rhodococcus jostii (strain RHA1).